Reading from the N-terminus, the 492-residue chain is Adenosylhomocysteinase (492 aa).

Substrate-binding residues include T68, D153, and E215. 216-218 (TTT) serves as a coordination point for NAD(+). Positions 245 and 249 each coordinate substrate. Residues N250, 279–284 (GYGDVG), E302, N337, 358–360 (IGH), and N406 each bind NAD(+).

It belongs to the adenosylhomocysteinase family. It depends on NAD(+) as a cofactor.

It localises to the cytoplasm. The enzyme catalyses S-adenosyl-L-homocysteine + H2O = L-homocysteine + adenosine. It functions in the pathway amino-acid biosynthesis; L-homocysteine biosynthesis; L-homocysteine from S-adenosyl-L-homocysteine: step 1/1. Functionally, may play a key role in the regulation of the intracellular concentration of adenosylhomocysteine. The sequence is that of Adenosylhomocysteinase from Mycobacterium marinum (strain ATCC BAA-535 / M).